A 161-amino-acid chain; its full sequence is Globin CTT-VIIB-10 (161 aa).

The signal sequence occupies residues 1 to 16 (MKFFAVLALCIVGAIA). The 144-residue stretch at 18-161 (PLTADEASLV…NTFAIVVPRL (144 aa)) folds into the Globin domain. Residues histidine 76 and histidine 111 each contribute to the heme b site.

The protein belongs to the globin family. Homodimer.

This is Globin CTT-VIIB-10 (CTT-7B10) from Chironomus thummi thummi (Midge).